A 239-amino-acid chain; its full sequence is RING finger protein 151 (239 aa).

Residues 20–58 form an RING-type zinc finger; that stretch reads CSVCHGVLKRPTRLPCSHIFCKKCIFRWLARQNTCPCCR. The TRAF-type zinc finger occupies 101–156; sequence EHQDSCPFELMACPNEGCTVQVLRGVLDEHRQHCQQNGQQRCPLGCGSTLAALEGE.

Interacts with DTNBP1. As to expression, expressed in testis. Expressed in round spermatids of the stages VII-VIII semniniferous tubules. Expressed in elongating spermatids of stages VIII-IX seminiferous tubules (at protein level).

It is found in the cytoplasm. Its subcellular location is the nucleus. In terms of biological role, may be involved in acrosome formation of spermatids. In Mus musculus (Mouse), this protein is RING finger protein 151 (Rnf151).